Reading from the N-terminus, the 302-residue chain is ATP synthase subunit a (302 aa).

7 helical membrane passes run 61–81, 119–139, 148–168, 172–192, 214–234, 252–272, and 273–293; these read VDSL…FWLG, IAPL…MDLI, FEWV…FKIV, DPNI…FLTI, PVVK…ALLA, FVFI…AWPW, and AVFH…LTIV.

The protein belongs to the ATPase A chain family. As to quaternary structure, F-type ATPases have 2 components, CF(1) - the catalytic core - and CF(0) - the membrane proton channel. CF(1) has five subunits: alpha(3), beta(3), gamma(1), delta(1), epsilon(1). CF(0) has three main subunits: a(1), b(2) and c(9-12). The alpha and beta chains form an alternating ring which encloses part of the gamma chain. CF(1) is attached to CF(0) by a central stalk formed by the gamma and epsilon chains, while a peripheral stalk is formed by the delta and b chains.

Its subcellular location is the cell inner membrane. In terms of biological role, key component of the proton channel; it plays a direct role in the translocation of protons across the membrane. This Alcanivorax borkumensis (strain ATCC 700651 / DSM 11573 / NCIMB 13689 / SK2) protein is ATP synthase subunit a.